A 554-amino-acid polypeptide reads, in one-letter code: uncharacterized protein (554 aa).

Residues aspartate 327 and asparagine 328 each coordinate Ca(2+).

Belongs to the sulfatase family. The cofactor is Ca(2+).

The protein localises to the cytoplasm. It localises to the nucleus. This is an uncharacterized protein from Schizosaccharomyces pombe (strain 972 / ATCC 24843) (Fission yeast).